Consider the following 237-residue polypeptide: Ribosomal RNA small subunit methyltransferase G (237 aa).

S-adenosyl-L-methionine-binding positions include Gly76, Phe81, 128–129 (IE), and Arg147.

Belongs to the methyltransferase superfamily. RNA methyltransferase RsmG family.

The protein localises to the cytoplasm. Its function is as follows. Specifically methylates the N7 position of a guanine in 16S rRNA. The polypeptide is Ribosomal RNA small subunit methyltransferase G (Prochlorococcus marinus (strain MIT 9301)).